An 804-amino-acid polypeptide reads, in one-letter code: MSMHRVARAVASTEACAGALRGSVPRARFLCLNSPVQGLGARNAILGARLGGKRHFSQSPIIRAGVAQAVLEKAAADPSALTQEAIVDNLNAAERDRLRRVRNIGIAAHIDSGKTTATERVLFYTGRINAIHEVRGKDAVGAKMDSMELEREKGITIQSAATFCDWLKVENGKEEKYHINLIDTPGHIDFTIEVERALRVLDGAVMILCAVSGVQSQTITVDRQMRRYNVPRISFINKMDRMGANPFKAVEQINQKLRIPAAALQVPIGSEDSFNGVVDLIRMKAIYNDGPKGEIIRETDEIPEELKKLCEEKRALLIETLADVDDEIAEIFLDEKTPSIEQMKAAIRRATINLKFTPVLMGSALADKSVQPMLDAVCDYLPNPAEVENLALDKRRAEAPVKLVSYNELPFVGLAFKLEESNYGQLTYIRVYQGSLKKGMNVFNARTDKRVKIPRIVRMHSNEMEEVPEIGAGEICAVFGVDCASGDTFTDGGLPYSMSSMFVPDPVISLSIKPKTTKDGSNFSKAMNRFQREDPTFRVHVDAESQETIISGMGELHLDIYVERMRREYKVEVETGKPQVAYRETITEHVVFDHTLKKQTGGAGDYARVVGFLEPIEPGPNGYAPSTFKEEVTGGSISDKFLFACEKGFLASCEKGPLLGHPVLGTHMVVNDGATHMTDSSEMAFKNATQQAFRKAFKEGKPQVLEPLMKTTITAPNEFQGNIVGLLNKRNAIISDTEIGPEDFTLIADCSLNAMFGFSSQLRAATQGKGEFGMEFSHYAPAPGQLQKELISNYEKAQADRHKK.

The transit peptide at 1 to 63 directs the protein to the mitochondrion; the sequence is MSMHRVARAV…RHFSQSPIIR (63 aa). The tr-type G domain occupies 99–385; sequence RRVRNIGIAA…AVCDYLPNPA (287 aa). Residues 108 to 115, 183 to 187, and 237 to 240 each bind GTP; these read AHIDSGKT, DTPGH, and NKMD.

It belongs to the TRAFAC class translation factor GTPase superfamily. Classic translation factor GTPase family. EF-G/EF-2 subfamily.

The protein localises to the mitochondrion. It participates in protein biosynthesis; polypeptide chain elongation. In terms of biological role, mitochondrial GTPase that catalyzes the GTP-dependent ribosomal translocation step during translation elongation. During this step, the ribosome changes from the pre-translocational (PRE) to the post-translocational (POST) state as the newly formed A-site-bound peptidyl-tRNA and P-site-bound deacylated tRNA move to the P and E sites, respectively. Catalyzes the coordinated movement of the two tRNA molecules, the mRNA and conformational changes in the ribosome. This is Elongation factor G, mitochondrial (mef1) from Botryotinia fuckeliana (strain B05.10) (Noble rot fungus).